We begin with the raw amino-acid sequence, 150 residues long: D-aminoacyl-tRNA deacylase (150 aa).

Positions 136 to 137 (GP) match the Gly-cisPro motif, important for rejection of L-amino acids motif.

This sequence belongs to the DTD family. Homodimer.

It is found in the cytoplasm. The catalysed reaction is glycyl-tRNA(Ala) + H2O = tRNA(Ala) + glycine + H(+). It carries out the reaction a D-aminoacyl-tRNA + H2O = a tRNA + a D-alpha-amino acid + H(+). Functionally, an aminoacyl-tRNA editing enzyme that deacylates mischarged D-aminoacyl-tRNAs. Also deacylates mischarged glycyl-tRNA(Ala), protecting cells against glycine mischarging by AlaRS. Acts via tRNA-based rather than protein-based catalysis; rejects L-amino acids rather than detecting D-amino acids in the active site. By recycling D-aminoacyl-tRNA to D-amino acids and free tRNA molecules, this enzyme counteracts the toxicity associated with the formation of D-aminoacyl-tRNA entities in vivo and helps enforce protein L-homochirality. The polypeptide is D-aminoacyl-tRNA deacylase (Staphylococcus epidermidis (strain ATCC 35984 / DSM 28319 / BCRC 17069 / CCUG 31568 / BM 3577 / RP62A)).